Reading from the N-terminus, the 218-residue chain is Superoxide dismutase [Mn] 2, mitochondrial (218 aa).

The transit peptide at 1–24 (MLQSTARTASKLVQPVAGVLAVRS) directs the protein to the mitochondrion. Residues H50, H98, D179, and H183 each contribute to the Mn(2+) site.

It belongs to the iron/manganese superoxide dismutase family. As to quaternary structure, homotetramer. Mn(2+) is required as a cofactor. Expressed in pharynx and rectum. Upon thermal stress, expressed in vulva, body wall muscles and hypodermis.

The protein resides in the mitochondrion. The enzyme catalyses 2 superoxide + 2 H(+) = H2O2 + O2. Its function is as follows. Destroys superoxide anion radicals which are normally produced within the cells and which are toxic to biological systems. The polypeptide is Superoxide dismutase [Mn] 2, mitochondrial (sod-3) (Caenorhabditis elegans).